The primary structure comprises 459 residues: Endoglucanase CelA (459 aa).

Positions 1–27 are cleaved as a signal peptide; the sequence is MKRLLALLATGVSIVGLTALAGPPAQA. The CBM2 domain maps to 28–134; sequence ATGCKAEYTI…TLNGATCSGS (107 aa). An intrachain disulfide couples Cys31 to Cys131. The segment at 129–151 is disordered; that stretch reads ATCSGSVTDPPTDPPTDPPATGT. Residues 136–147 are linker ('hinge') (Pro-Thr box); that stretch reads TDPPTDPPTDPP. Residues 148–357 form a catalytic region; the sequence is ATGTPAAVNG…YAFHFYAASH (210 aa). Glu286 serves as the catalytic Proton donor. Catalysis depends on Glu378, which acts as the Nucleophile.

The protein belongs to the glycosyl hydrolase 5 (cellulase A) family. In terms of processing, the linker region (also termed 'hinge') may be a potential site for proteolysis.

It catalyses the reaction Endohydrolysis of (1-&gt;4)-beta-D-glucosidic linkages in cellulose, lichenin and cereal beta-D-glucans.. In Streptomyces lividans, this protein is Endoglucanase CelA (celA).